A 349-amino-acid polypeptide reads, in one-letter code: Cyclic amide hydrolase (349 aa).

The RU A stretch occupies residues 1-90; that stretch reads MTSPEDTAGV…AVFVDDPASS (90 aa). Arg-38 lines the substrate pocket. The segment at 99–231 is RU B; that stretch reads GLSIGVTTTA…AAVLVMGNSP (133 aa). Lys-149 is an active-site residue. Substrate is bound by residues Arg-176, 214–215, Lys-311, and 330–331; these read SA and SG. Ser-214 functions as the Nucleophile in the catalytic mechanism. The segment at 237-349 is RU C; the sequence is YRIGHGVLRD…GGGTVAVIAR (113 aa).

The protein belongs to the cyclic amide hydrolase (CyAH) family. In terms of assembly, homotetramer.

Its function is as follows. Cyclic amide hydrolase of unknown substrate specificity. Catalyzes the hydrolytic ring-opening of a cyclic amide. Does not act on cyanuric acid nor barbituric acid. The polypeptide is Cyclic amide hydrolase (Rhodococcus sp).